Consider the following 70-residue polypeptide: Large ribosomal subunit protein bL31 (70 aa).

K8 is subject to N6-acetyllysine. C16, C18, C37, and C40 together coordinate Zn(2+).

This sequence belongs to the bacterial ribosomal protein bL31 family. Type A subfamily. In terms of assembly, part of the 50S ribosomal subunit. The cofactor is Zn(2+).

Functionally, binds the 23S rRNA. This Shigella flexneri protein is Large ribosomal subunit protein bL31.